The chain runs to 166 residues: Protein FAM163B (166 aa).

The chain crosses the membrane as a helical span at residues 6–26 (VVITGGILATVILLCIIAVLC). Ser-40 carries the phosphoserine modification.

Belongs to the FAM163 family.

It is found in the membrane. This Homo sapiens (Human) protein is Protein FAM163B (FAM163B).